A 97-amino-acid polypeptide reads, in one-letter code: Coiled-coil domain-containing protein 167 (97 aa).

Positions 2–78 (TKKKRENLGV…LLRHENRKNT (77 aa)) form a coiled coil. The helical transmembrane segment at 78–95 (TLLSVAIFTVFALLYAYW) threads the bilayer.

The protein resides in the membrane. This Mus musculus (Mouse) protein is Coiled-coil domain-containing protein 167 (Ccdc167).